Reading from the N-terminus, the 352-residue chain is tRNA-specific 2-thiouridylase MnmA (352 aa).

ATP is bound by residues 7–14 (GLSGGVDS) and leucine 33. Cysteine 94 acts as the Nucleophile in catalysis. A disulfide bridge links cysteine 94 with cysteine 193. Residue glycine 119 participates in ATP binding. The interaction with tRNA stretch occupies residues 143 to 145 (KDQ). Catalysis depends on cysteine 193, which acts as the Cysteine persulfide intermediate. Positions 298–299 (RY) are interaction with tRNA.

This sequence belongs to the MnmA/TRMU family.

The protein localises to the cytoplasm. The catalysed reaction is S-sulfanyl-L-cysteinyl-[protein] + uridine(34) in tRNA + AH2 + ATP = 2-thiouridine(34) in tRNA + L-cysteinyl-[protein] + A + AMP + diphosphate + H(+). Catalyzes the 2-thiolation of uridine at the wobble position (U34) of tRNA, leading to the formation of s(2)U34. This Nostoc sp. (strain PCC 7120 / SAG 25.82 / UTEX 2576) protein is tRNA-specific 2-thiouridylase MnmA.